A 457-amino-acid polypeptide reads, in one-letter code: Heme sensor protein HssS (457 aa).

Helical transmembrane passes span 9-29 and 164-184; these read IAIYSITVILFSALISFVLTN and TFLAVLLMLLLFISISLVIAS. The HAMP domain occupies 186-238; sequence YSIIRPVKKLKLATERLIDGDFETPIKQTRKDEIGTLQYHFNKMRESLGQVDQ. The 211-residue stretch at 246–456 folds into the Histidine kinase domain; the sequence is NVSHEIKTPL…TFTITLPNNS (211 aa). His249 bears the Phosphohistidine; by autocatalysis mark.

In terms of processing, autophosphorylated.

It is found in the cell membrane. The catalysed reaction is ATP + protein L-histidine = ADP + protein N-phospho-L-histidine.. Its function is as follows. Member of the two-component regulatory system HssS/HssR involved in intracellular heme homeostasis and tempering of staphylococcal virulence. HssS functions as a heme sensor histidine kinase which is autophosphorylated at a histidine residue and transfers its phosphate group to an aspartate residue of HssR. HssR/HssS activates the expression of hrtAB, an efflux pump, in response to extracellular heme, hemin, hemoglobin or blood. The polypeptide is Heme sensor protein HssS (hssS) (Staphylococcus aureus (strain USA300)).